The primary structure comprises 148 residues: Deoxyuridine 5'-triphosphate nucleotidohydrolase (148 aa).

Substrate is bound by residues 67 to 69 (RSG), Asn-80, 84 to 86 (LID), and Met-94.

The protein belongs to the dUTPase family. It depends on Mg(2+) as a cofactor.

The catalysed reaction is dUTP + H2O = dUMP + diphosphate + H(+). The protein operates within pyrimidine metabolism; dUMP biosynthesis; dUMP from dCTP (dUTP route): step 2/2. Functionally, this enzyme is involved in nucleotide metabolism: it produces dUMP, the immediate precursor of thymidine nucleotides and it decreases the intracellular concentration of dUTP so that uracil cannot be incorporated into DNA. This is Deoxyuridine 5'-triphosphate nucleotidohydrolase from Paraburkholderia phymatum (strain DSM 17167 / CIP 108236 / LMG 21445 / STM815) (Burkholderia phymatum).